The chain runs to 267 residues: Tryptophan synthase alpha chain (267 aa).

Catalysis depends on proton acceptor residues Glu49 and Asp60.

It belongs to the TrpA family. As to quaternary structure, tetramer of two alpha and two beta chains.

It catalyses the reaction (1S,2R)-1-C-(indol-3-yl)glycerol 3-phosphate + L-serine = D-glyceraldehyde 3-phosphate + L-tryptophan + H2O. Its pathway is amino-acid biosynthesis; L-tryptophan biosynthesis; L-tryptophan from chorismate: step 5/5. Its function is as follows. The alpha subunit is responsible for the aldol cleavage of indoleglycerol phosphate to indole and glyceraldehyde 3-phosphate. The sequence is that of Tryptophan synthase alpha chain from Geotalea uraniireducens (strain Rf4) (Geobacter uraniireducens).